Consider the following 338-residue polypeptide: Ferrochelatase (338 aa).

2 residues coordinate Fe cation: His-189 and Glu-294.

It belongs to the ferrochelatase family.

Its subcellular location is the cytoplasm. It carries out the reaction heme b + 2 H(+) = protoporphyrin IX + Fe(2+). It functions in the pathway porphyrin-containing compound metabolism; protoheme biosynthesis; protoheme from protoporphyrin-IX: step 1/1. Catalyzes the ferrous insertion into protoporphyrin IX. The protein is Ferrochelatase of Pseudomonas putida (strain ATCC 47054 / DSM 6125 / CFBP 8728 / NCIMB 11950 / KT2440).